Here is a 310-residue protein sequence, read N- to C-terminus: Tetrahydromethanopterin S-methyltransferase subunit H (310 aa).

This sequence belongs to the MtrH family. The complex is composed of 8 subunits; MtrA, MtrB, MtrC, MtrD, MtrE, MtrF, MtrG and MtrH.

It catalyses the reaction 5-methyl-5,6,7,8-tetrahydromethanopterin + coenzyme M + 2 Na(+)(in) = 5,6,7,8-tetrahydromethanopterin + methyl-coenzyme M + 2 Na(+)(out). It participates in one-carbon metabolism; methanogenesis from CO(2); methyl-coenzyme M from 5,10-methylene-5,6,7,8-tetrahydromethanopterin: step 2/2. In terms of biological role, part of a complex that catalyzes the formation of methyl-coenzyme M and tetrahydromethanopterin from coenzyme M and methyl-tetrahydromethanopterin. This is an energy-conserving, sodium-ion translocating step. MtrH catalyzes the transfer of the methyl group from methyl-tetrahydromethanopterin to the corrinoid prosthetic group of MtrA. This Methanothermobacter thermautotrophicus (strain ATCC 29096 / DSM 1053 / JCM 10044 / NBRC 100330 / Delta H) (Methanobacterium thermoautotrophicum) protein is Tetrahydromethanopterin S-methyltransferase subunit H.